The chain runs to 127 residues: Large ribosomal subunit protein bL19 (127 aa).

It belongs to the bacterial ribosomal protein bL19 family.

Functionally, this protein is located at the 30S-50S ribosomal subunit interface and may play a role in the structure and function of the aminoacyl-tRNA binding site. This is Large ribosomal subunit protein bL19 from Acidovorax ebreus (strain TPSY) (Diaphorobacter sp. (strain TPSY)).